A 46-amino-acid chain; its full sequence is Photosystem II reaction center protein K (46 aa).

The propeptide occupies 1-9; it reads MLILLNTFA. Residues 25-45 form a helical membrane-spanning segment; it reads LPLIPLFFFLLVFVWQAAVGF.

Belongs to the PsbK family. In terms of assembly, PSII is composed of 1 copy each of membrane proteins PsbA, PsbB, PsbC, PsbD, PsbE, PsbF, PsbH, PsbI, PsbJ, PsbK, PsbL, PsbM, PsbT, PsbX, PsbY, Psb30/Ycf12, peripheral proteins PsbO, CyanoQ (PsbQ), PsbU, PsbV and a large number of cofactors. It forms dimeric complexes.

It is found in the cellular thylakoid membrane. Functionally, one of the components of the core complex of photosystem II (PSII). PSII is a light-driven water:plastoquinone oxidoreductase that uses light energy to abstract electrons from H(2)O, generating O(2) and a proton gradient subsequently used for ATP formation. It consists of a core antenna complex that captures photons, and an electron transfer chain that converts photonic excitation into a charge separation. This chain is Photosystem II reaction center protein K, found in Prochlorococcus marinus (strain MIT 9215).